The sequence spans 65 residues: Large ribosomal subunit protein bL35 (65 aa).

The protein belongs to the bacterial ribosomal protein bL35 family.

This Parasynechococcus marenigrum (strain WH8102) protein is Large ribosomal subunit protein bL35.